Reading from the N-terminus, the 438-residue chain is Putative formin-like protein 21a (438 aa).

Residues 1-74 are disordered; the sequence is MSPVEISGAD…RVLPRPPPPP (74 aa). Residues 22-61 are compositionally biased toward pro residues; it reads PLPPPPPPPPPPMRRRAPLPPPPPPPMRRRAPLPPPPPPA. The FH2 domain occupies 124 to 438; it reads FPCPSKKKSS…SYGYFDQPWI (315 aa).

This sequence belongs to the formin-like family. Class-II subfamily.

In Arabidopsis thaliana (Mouse-ear cress), this protein is Putative formin-like protein 21a (FH21A).